Consider the following 163-residue polypeptide: Crossover junction endodeoxyribonuclease RuvC (163 aa).

Residues Asp9, Glu76, and Asp148 contribute to the active site. Mg(2+) is bound by residues Asp9, Glu76, and Asp148.

It belongs to the RuvC family. As to quaternary structure, homodimer which binds Holliday junction (HJ) DNA. The HJ becomes 2-fold symmetrical on binding to RuvC with unstacked arms; it has a different conformation from HJ DNA in complex with RuvA. In the full resolvosome a probable DNA-RuvA(4)-RuvB(12)-RuvC(2) complex forms which resolves the HJ. It depends on Mg(2+) as a cofactor.

Its subcellular location is the cytoplasm. It carries out the reaction Endonucleolytic cleavage at a junction such as a reciprocal single-stranded crossover between two homologous DNA duplexes (Holliday junction).. In terms of biological role, the RuvA-RuvB-RuvC complex processes Holliday junction (HJ) DNA during genetic recombination and DNA repair. Endonuclease that resolves HJ intermediates. Cleaves cruciform DNA by making single-stranded nicks across the HJ at symmetrical positions within the homologous arms, yielding a 5'-phosphate and a 3'-hydroxyl group; requires a central core of homology in the junction. The consensus cleavage sequence is 5'-(A/T)TT(C/G)-3'. Cleavage occurs on the 3'-side of the TT dinucleotide at the point of strand exchange. HJ branch migration catalyzed by RuvA-RuvB allows RuvC to scan DNA until it finds its consensus sequence, where it cleaves and resolves the cruciform DNA. The protein is Crossover junction endodeoxyribonuclease RuvC of Trichodesmium erythraeum (strain IMS101).